Reading from the N-terminus, the 323-residue chain is Pantothenate kinase (323 aa).

An ATP-binding site is contributed by 101–108 (GSVAVGKS).

This sequence belongs to the prokaryotic pantothenate kinase family.

It localises to the cytoplasm. The enzyme catalyses (R)-pantothenate + ATP = (R)-4'-phosphopantothenate + ADP + H(+). The protein operates within cofactor biosynthesis; coenzyme A biosynthesis; CoA from (R)-pantothenate: step 1/5. The polypeptide is Pantothenate kinase (Paenarthrobacter aurescens (strain TC1)).